The following is a 427-amino-acid chain: Homeotic protein caudal (427 aa).

Positions 104 to 273 (QLMQQHHHHH…QPQPGKTRTK (170 aa)) are disordered. Residues 116–129 (ASSSSASSGSSSSG) show a composition bias toward low complexity. Residues 145–164 (GVGGAGGGGGVGGATDGGPG) are compositionally biased toward gly residues. A compositionally biased stretch (polar residues) spans 183–195 (ITVSGSEISSPGA). Residues 209–243 (HLSAVANNNNNNNNNNNSPSTHNNNNNNNSVSNNN) are compositionally biased toward low complexity. A Phosphothreonine modification is found at T245. The Antp-type hexapeptide motif lies at 252–257 (YFDWMK). Positions 273 to 332 (KDKYRVVYTDFQRLELEKEYCTSRYITIRRKSELAQTLSLSERQVKIWFQNRRAKERKQN) form a DNA-binding region, homeobox.

The protein belongs to the Caudal homeobox family. In terms of tissue distribution, maternally localized in an anteroposterior gradient in the syncytial blastoderm. Also expressed in the pole cells. Zygotically localized in the primordia of the terminal abdominal segment, the hindgut and in the posterior midgut rudiment. Expressed in the gut, the gonads and parts of the genital disks of third instar larvae (at protein level).

The protein localises to the nucleus. In terms of biological role, caudal (cad) is one of a number of transcription factors controlling segmentation of the embryo. Further transcriptional regulation via a 5' flanking region containing DNA replication-related elements (DRE) and by dref also regulated by trh and tgo via the CNS midline element. Alongside Bicoid (bcd), caudal forms concentration gradients down the anterior-posterior (A-P) axis providing positional information and subsequent induction of the gap genes. Plays a role in gastrulation/germ band extension, hindgut morphogenesis, positive regulation of cell proliferation, genital disk development and pattern formation. Acts as a key regulator of the Hox gene network and activates transcription via the downstream core promoter element (DPE) relative to the TATA box. Plays a role in the establishment of the hindgut and in the invagination of the hindgut primordium during gastrulation. These effects on the gut are achieved by acting combinatorially at the posterior of the embryo to activate transcription of different targets including fog, fkh and wg. Caudal is involved in regulation of proliferation through transactivation of the E2F gene. Postembryonically its function is mostly restricted to the intestine where it regulates antimicrobial peptide (AMP) levels preserving the normal gut flora. The sequence is that of Homeotic protein caudal (cad) from Drosophila melanogaster (Fruit fly).